We begin with the raw amino-acid sequence, 448 residues long: uncharacterized protein (448 aa).

The residue at position 297 (lysine 297) is an N6-(pyridoxal phosphate)lysine.

Belongs to the class-III pyridoxal-phosphate-dependent aminotransferase family. Pyridoxal 5'-phosphate serves as cofactor.

This is an uncharacterized protein from Sinorhizobium fredii (strain NBRC 101917 / NGR234).